Consider the following 232-residue polypeptide: Probable dihydroorotate dehydrogenase B (NAD(+)), electron transfer subunit (232 aa).

Residues 1–86 (MYYTRITQIE…RGAFGSAFTP (86 aa)) form the FAD-binding FR-type domain. Residues C202, C207, C210, and C219 each coordinate [2Fe-2S] cluster.

Belongs to the PyrK family. As to quaternary structure, heterotetramer of 2 PyrK and 2 PyrD type B subunits. The cofactor is [2Fe-2S] cluster. Requires FAD as cofactor.

It participates in pyrimidine metabolism; UMP biosynthesis via de novo pathway; orotate from (S)-dihydroorotate (NAD(+) route): step 1/1. Functionally, responsible for channeling the electrons from the oxidation of dihydroorotate from the FMN redox center in the PyrD type B subunit to the ultimate electron acceptor NAD(+). This chain is Probable dihydroorotate dehydrogenase B (NAD(+)), electron transfer subunit, found in Archaeoglobus fulgidus (strain ATCC 49558 / DSM 4304 / JCM 9628 / NBRC 100126 / VC-16).